A 511-amino-acid polypeptide reads, in one-letter code: NAD(P)H-quinone oxidoreductase subunit 2 B, chloroplastic (511 aa).

13 helical membrane passes run 24 to 44 (LLLFHGSFIFPECILIFGLIL), 57 to 77 (IPWLYFISSTSLVMSIAALLF), 99 to 119 (IFQFLILLCSTLCIPLSVEYI), 124 to 144 (MAITEFLLFVLTATLGGMFLC), 149 to 169 (LITIFVAPECFSLCSYLLSGY), 183 to 203 (YLLMGGASSSILVHGFSWLYG), 227 to 247 (PGISIALIFITVGIGFKLSPA), 295 to 315 (WHLLLEILAILSMILGNLIAI), 323 to 343 (MLAYSSIGQIGYVIIGIIVGD), 354 to 374 (YMLFYISMNLGTFACIVLFGL), 395 to 415 (ALSLALCLLSLGGLPPLAGFF), 418 to 438 (LHLFWCGWQAGLYFLVSIGLL), and 484 to 504 (MIVCVIASTIPGISMNPIIAI).

It belongs to the complex I subunit 2 family. In terms of assembly, NDH is composed of at least 16 different subunits, 5 of which are encoded in the nucleus.

It is found in the plastid. Its subcellular location is the chloroplast thylakoid membrane. It catalyses the reaction a plastoquinone + NADH + (n+1) H(+)(in) = a plastoquinol + NAD(+) + n H(+)(out). The enzyme catalyses a plastoquinone + NADPH + (n+1) H(+)(in) = a plastoquinol + NADP(+) + n H(+)(out). NDH shuttles electrons from NAD(P)H:plastoquinone, via FMN and iron-sulfur (Fe-S) centers, to quinones in the photosynthetic chain and possibly in a chloroplast respiratory chain. The immediate electron acceptor for the enzyme in this species is believed to be plastoquinone. Couples the redox reaction to proton translocation, and thus conserves the redox energy in a proton gradient. This Nandina domestica (Heavenly bamboo) protein is NAD(P)H-quinone oxidoreductase subunit 2 B, chloroplastic.